A 1437-amino-acid polypeptide reads, in one-letter code: IQ domain-containing protein N (1437 aa).

The IQ 1 domain maps to 84 to 112; sequence SRAATVIQASWKGYRLRQKLISQMTAAKA. Disordered regions lie at residues 332–353, 416–440, and 848–878; these read TSPTSPVIRLPAPVGPNSSLSN, SQAQTYTVSTSSKTSPSSPTVKPSP, and STGSRAKPDDRSVAQPQLHSHAPNKTMQNPR. Residues 422–440 show a composition bias toward low complexity; it reads TVSTSSKTSPSSPTVKPSP. The span at 861-878 shows a compositional bias: polar residues; the sequence is AQPQLHSHAPNKTMQNPR. 5 IQ domains span residues 1190 to 1216, 1217 to 1239, 1240 to 1258, 1361 to 1389, and 1390 to 1413; these read QAVVTIQACARGYLVRRTVKVWHQWAT, IIQATWRGYRVRRNLERLFRATT, IIQAAWRGYCIRRARARQV, QHRACTIIQAAWKGYRTRRQLSQKQSAAK, and MVQAVWRGHYTRSCLTTDALLGTG.

Interacts with calmodulin. Expressed in testis, in elongating spermatids (at protein level).

Its function is as follows. Essential for spermiogenesis and fertilization. May be required for manchette assembly in elongating spermatids. The protein is IQ domain-containing protein N (Iqcn) of Mus musculus (Mouse).